Consider the following 328-residue polypeptide: Reticulocalbin-3 (328 aa).

An N-terminal signal peptide occupies residues 1–20; the sequence is MMWRPSVLLLLLLLRHGAQG. The tract at residues 19–49 is disordered; the sequence is QGKPSPDAGPHGQGRVHQAAPLSDAPHDDAH. EF-hand domains follow at residues 75–112, 113–148, 163–198, 200–235, 241–276, and 277–312; these read ESQARLGRIVDRMDRAGDGDGWVSLAELRAWIAHTQQR, HIRDSVSAAWDTYDTDRDGRVGWEELRNATYGHYAP, KMLARDERRFRVADQDGDSMATREELTAFLHPEEFP, MRDIVIAETLEDLDRNKDGYVQVEEYIADLYSAEPG, WVQTERQQFRDFRDLNKDGHLDGSEVGHWVLPPAQD, and QPLVEANHLLHESDTDKDGRLSKAEILGNWNMFVGS. Ca(2+) contacts are provided by Asp-92, Asp-94, Trp-96, Glu-101, Asp-126, Asp-128, Asp-130, Arg-132, and Glu-137. The N-linked (GlcNAc...) asparagine glycan is linked to Asn-140. Asp-176, Asp-178, Asp-180, Met-182, Glu-187, Asp-213, Asn-215, Asp-217, Tyr-219, Glu-224, Asp-254, Asn-256, Asp-258, His-260, Glu-265, Asp-290, Asp-292, Asp-294, Arg-296, and Glu-301 together coordinate Ca(2+). The Prevents secretion from ER signature appears at 325–328; it reads HDEL.

This sequence belongs to the CREC family. In terms of assembly, interacts with PCSK6 (immature form including the propeptide); probably involved in the maturation and the secretion of PCSK6. In terms of processing, degraded by PCSK6 and other endoproteases including FURIN and PCSK5. Post-translationally, N-glycosylated. In terms of tissue distribution, widely expressed.

Its subcellular location is the endoplasmic reticulum lumen. Its function is as follows. Probable molecular chaperone assisting protein biosynthesis and transport in the endoplasmic reticulum. Required for the proper biosynthesis and transport of pulmonary surfactant-associated protein A/SP-A, pulmonary surfactant-associated protein D/SP-D and the lipid transporter ABCA3. By regulating both the proper expression and the degradation through the endoplasmic reticulum-associated protein degradation pathway of these proteins plays a crucial role in pulmonary surfactant homeostasis. Has an anti-fibrotic activity by negatively regulating the secretion of type I and type III collagens. This calcium-binding protein also transiently associates with immature PCSK6 and regulates its secretion. In Homo sapiens (Human), this protein is Reticulocalbin-3.